Reading from the N-terminus, the 443-residue chain is Zinc finger protein ZIC 1 (443 aa).

Residues 221 to 256 form a C2H2-type 1; atypical zinc finger; sequence LICKWIEPEQLANPKKSCNKTFSTMHELVTHVTVEH. A C2H2-type 2; atypical zinc finger spans residues 265-292; it reads HICVWEECPREGKPFKAKYKLINHIRVH. 3 C2H2-type zinc fingers span residues 298 to 322, 328 to 352, and 358 to 380; these read FPCP…KRTH, FKCE…MHVH, and YLCK…MKVH. Positions 371 to 433 are disordered; that stretch reads SSLRKHMKVH…AVHHTSNHST (63 aa). Over residues 383 to 396 the composition is skewed to low complexity; the sequence is SSQGSQPSPAASSG. Positions 397–413 are enriched in polar residues; the sequence is YESSTPPTIVSPSAENQ. Residues 408–443 are negatively regulates transcriptional activity; that stretch reads PSAENQSTSSLSPSSSAVHHTSNHSTLSSNFNEWYV. Residues 414–433 show a composition bias toward low complexity; the sequence is STSSLSPSSSAVHHTSNHST.

Belongs to the GLI C2H2-type zinc-finger protein family. During early gastrula stages, widely expressed in the dorsal ectoderm. At mid-gastrula, expressed throughout the presumptive neural plate and at late gastrula, expression gradually diminishes in the dorsal midline and increases in the anterior folds. By early neurula stage, expression becomes restricted to the lateral edges of the neural plate, corresponding to the presumptive dorsal neural plate and neural crest, and in flanking ectoderm. In early tailbud stages (stages 22-23), expressed in the dorsal forebrain, midbrain and hindbrain. Subsequently expressed in the telencephalon and at the diencephalon/mesencephalon boundary. In the spinal cord, expression is restricted to the dorsal most region including the roof plate. Also expressed in the somites but not in eye vesicles. At larval stages, expressed mainly in the dorsal neural tube throughout its anteroposterior axis.

It is found in the nucleus. The protein resides in the cytoplasm. In terms of biological role, transcriptional activator that induces expression of multiple genes including pax3, en2, snai2/slug, feb and a subset of wnt genes. Has multiple key roles in the regulation of neural induction and neurogenesis: acts as a neural competence factor, sensitizing the presumptive neuroectoderm to respond to subsequent neuralizing signals. Promotes both preplacodal cell fates and neural crest cell fates, two of the cell populations that arise from the neural plate border. Cooperates with pax3 in concert with wnt signaling to determine neural crest fate. Synergizes with the bmp-inhibitor noggin/nog and acts through the wnt pathway to induce expression of en2. May bind to the minimal GLI-consensus sequence 5'-TGGGTGGTC-3'. The chain is Zinc finger protein ZIC 1 (zic1) from Xenopus laevis (African clawed frog).